The chain runs to 450 residues: tRNA modification GTPase MnmE (450 aa).

Arg23, Glu79, and Lys118 together coordinate (6S)-5-formyl-5,6,7,8-tetrahydrofolate. Residues 214-374 form the TrmE-type G domain; that stretch reads GITLILVGKP…LKEHILNKVG (161 aa). K(+) is bound at residue Asn224. GTP-binding positions include 224–229, 243–249, and 268–271; these read NAGKSS, TSIAGTT, and DTAG. Ser228 serves as a coordination point for Mg(2+). K(+) contacts are provided by Thr243, Ile245, and Thr248. A Mg(2+)-binding site is contributed by Thr249. Position 450 (Lys450) interacts with (6S)-5-formyl-5,6,7,8-tetrahydrofolate.

This sequence belongs to the TRAFAC class TrmE-Era-EngA-EngB-Septin-like GTPase superfamily. TrmE GTPase family. As to quaternary structure, homodimer. Heterotetramer of two MnmE and two MnmG subunits. Requires K(+) as cofactor.

The protein localises to the cytoplasm. In terms of biological role, exhibits a very high intrinsic GTPase hydrolysis rate. Involved in the addition of a carboxymethylaminomethyl (cmnm) group at the wobble position (U34) of certain tRNAs, forming tRNA-cmnm(5)s(2)U34. In Francisella tularensis subsp. tularensis (strain WY96-3418), this protein is tRNA modification GTPase MnmE.